The following is a 591-amino-acid chain: Acyl-CoA-dependent acyltransferase MAC1 (591 aa).

The interval 589–591 is peroxisomal targeting signal type 1; sequence ARL.

Belongs to the trichothecene O-acetyltransferase family.

It localises to the peroxisome. The protein operates within secondary metabolite biosynthesis. Acyl-CoA-dependent acyltransferase; part of the gene cluster that mediates the biosynthesis of mannosylerythritol lipids (MELs), surface-active substances that enhance the availability of water-insoluble substrates. Mannosylerythritol lipid production is responsible for hemolytic activity of Ustilago maydis. Depending on the number of acetyl groups, mannosylerythritol lipids can be differentiated into MEL A (fully acetylated), MEL B and MEL C (monoacetylated at R-6 and R-4, respectively), and the fully deacetylated MEL D. The first step in the pathway is the generation of mannosylerythritol by the glycosyltransferase EMT1 which catalyzes the transfer of GDP-mannose to the C-4 atom of meso-erythritol. This reaction has to be stereospecific, since only mannosyl-D-erythritol is generated. The produced disaccharide is subsequently acylated with fatty acids of various lengths derived from the peroxisomal beta-oxidation by the peroxisomal acyltransferases MAC1 and MAC2 at positions C-2 and C-3, repectively. The existence of MEL derivatives which carry an acetyl group at C-2 implies that at least MAC1 also accepts acetyl-CoA as a donor. The final step of MEL biosynthesis is the acetylation of the fully acylated mannosylerythritol lipids catalyzed by the acetyl-CoA-dependent acetyltransferase MAT1. MAT1 displays a relaxed regioselectivity and is able to transfer acetylgroups to both positions C-4 and C-6 of the mannosyl moiety. In Mycosarcoma maydis (Corn smut fungus), this protein is Acyl-CoA-dependent acyltransferase MAC1.